We begin with the raw amino-acid sequence, 126 residues long: MNIPQELKYTKDHEWVKIDGDTVTIGVTDFAQGELGDIVYVEVETLDETLDKEEVFGTVEAVKTVSDLYMPVSGEIIEFNESLEDEPEKVNEDPYGEGWMIKIKLSDTSELEDLLSADEYKEVVGS.

The 83-residue stretch at 22–104 (TVTIGVTDFA…YGEGWMIKIK (83 aa)) folds into the Lipoyl-binding domain. Lysine 63 carries the post-translational modification N6-lipoyllysine.

It belongs to the GcvH family. As to quaternary structure, the glycine cleavage system is composed of four proteins: P, T, L and H. (R)-lipoate serves as cofactor.

In terms of biological role, the glycine cleavage system catalyzes the degradation of glycine. The H protein shuttles the methylamine group of glycine from the P protein to the T protein. The polypeptide is Glycine cleavage system H protein (Christiangramia forsetii (strain DSM 17595 / CGMCC 1.15422 / KT0803) (Gramella forsetii)).